A 185-amino-acid polypeptide reads, in one-letter code: MSSPSKRREMDLMKLMMSDYKVEMINDGMQEFFVEFSGPKDSIYEGGVWKIRVELPDAYPYKSPSVGFITKIYHPNVDEMSGSVCLDVINQTWSPMFDLVNVFETFLPQLLLYPNPSDPLNGEAAALMMRDRPTYEQRVKEYCEKYAKPRADTEEMSSDDEMSEDEYASDGDDEDDVAIAGKLDP.

The region spanning 1-148 (MSSPSKRREM…VKEYCEKYAK (148 aa)) is the UBC core domain. C85 acts as the Glycyl thioester intermediate in catalysis. Residues 146–185 (YAKPRADTEEMSSDDEMSEDEYASDGDDEDDVAIAGKLDP) form a disordered region. Acidic residues predominate over residues 154–177 (EEMSSDDEMSEDEYASDGDDEDDV).

This sequence belongs to the ubiquitin-conjugating enzyme family. In terms of tissue distribution, expressed in developing ovules, but not in vascular tissues.

It catalyses the reaction S-ubiquitinyl-[E1 ubiquitin-activating enzyme]-L-cysteine + [E2 ubiquitin-conjugating enzyme]-L-cysteine = [E1 ubiquitin-activating enzyme]-L-cysteine + S-ubiquitinyl-[E2 ubiquitin-conjugating enzyme]-L-cysteine.. It participates in protein modification; protein ubiquitination. Its function is as follows. Accepts the ubiquitin from the E1 complex and catalyzes its covalent attachment to other proteins. The sequence is that of Ubiquitin-conjugating enzyme E2 5 (UBC5) from Arabidopsis thaliana (Mouse-ear cress).